The following is a 985-amino-acid chain: Probable beta-galactosidase C (985 aa).

Positions 1-23 (MRILSLLFLLLLGFLAGNRVVSA) are cleaved as a signal peptide. Positions 82, 127, 128, 129, and 187 each coordinate substrate. The active-site Proton donor is Glu188. Tyr251 is a substrate binding site. Cys257 and Cys304 are joined by a disulfide. Asn276 carries N-linked (GlcNAc...) asparagine glycosylation. Catalysis depends on Glu287, which acts as the Nucleophile. Tyr353 provides a ligand contact to substrate. 8 N-linked (GlcNAc...) asparagine glycosylation sites follow: Asn391, Asn434, Asn517, Asn602, Asn677, Asn715, Asn720, and Asn759.

This sequence belongs to the glycosyl hydrolase 35 family.

The protein localises to the secreted. The catalysed reaction is Hydrolysis of terminal non-reducing beta-D-galactose residues in beta-D-galactosides.. Functionally, cleaves beta-linked terminal galactosyl residues from gangliosides, glycoproteins, and glycosaminoglycans. The chain is Probable beta-galactosidase C (lacC) from Aspergillus clavatus (strain ATCC 1007 / CBS 513.65 / DSM 816 / NCTC 3887 / NRRL 1 / QM 1276 / 107).